A 342-amino-acid chain; its full sequence is Holliday junction branch migration complex subunit RuvB (342 aa).

Residues 1–185 (MREDYLKSDD…FGINARLEYY (185 aa)) are large ATPase domain (RuvB-L). ATP contacts are provided by residues Leu-24, Arg-25, Gly-66, Lys-69, Thr-70, Thr-71, 132-134 (EDY), Arg-175, Tyr-185, and Arg-222. Thr-70 contributes to the Mg(2+) binding site. The tract at residues 186–256 (DAKLLTRIVQ…IARIALQALN (71 aa)) is small ATPAse domain (RuvB-S). Positions 259–342 (HNGLDDMDNR…PPAQSGTLFE (84 aa)) are head domain (RuvB-H). Residues Arg-314 and Arg-319 each contribute to the DNA site.

Belongs to the RuvB family. In terms of assembly, homohexamer. Forms an RuvA(8)-RuvB(12)-Holliday junction (HJ) complex. HJ DNA is sandwiched between 2 RuvA tetramers; dsDNA enters through RuvA and exits via RuvB. An RuvB hexamer assembles on each DNA strand where it exits the tetramer. Each RuvB hexamer is contacted by two RuvA subunits (via domain III) on 2 adjacent RuvB subunits; this complex drives branch migration. In the full resolvosome a probable DNA-RuvA(4)-RuvB(12)-RuvC(2) complex forms which resolves the HJ.

The protein localises to the cytoplasm. It carries out the reaction ATP + H2O = ADP + phosphate + H(+). In terms of biological role, the RuvA-RuvB-RuvC complex processes Holliday junction (HJ) DNA during genetic recombination and DNA repair, while the RuvA-RuvB complex plays an important role in the rescue of blocked DNA replication forks via replication fork reversal (RFR). RuvA specifically binds to HJ cruciform DNA, conferring on it an open structure. The RuvB hexamer acts as an ATP-dependent pump, pulling dsDNA into and through the RuvAB complex. RuvB forms 2 homohexamers on either side of HJ DNA bound by 1 or 2 RuvA tetramers; 4 subunits per hexamer contact DNA at a time. Coordinated motions by a converter formed by DNA-disengaged RuvB subunits stimulates ATP hydrolysis and nucleotide exchange. Immobilization of the converter enables RuvB to convert the ATP-contained energy into a lever motion, pulling 2 nucleotides of DNA out of the RuvA tetramer per ATP hydrolyzed, thus driving DNA branch migration. The RuvB motors rotate together with the DNA substrate, which together with the progressing nucleotide cycle form the mechanistic basis for DNA recombination by continuous HJ branch migration. Branch migration allows RuvC to scan DNA until it finds its consensus sequence, where it cleaves and resolves cruciform DNA. The polypeptide is Holliday junction branch migration complex subunit RuvB (Cytophaga hutchinsonii (strain ATCC 33406 / DSM 1761 / CIP 103989 / NBRC 15051 / NCIMB 9469 / D465)).